We begin with the raw amino-acid sequence, 212 residues long: Cell division protein YtfB (212 aa).

A helical transmembrane segment spans residues 34-50; sequence GIIIAAIVLVVGFLLPS. Residues 88 to 127 are disordered; the sequence is NDPDQVAPVAPEPIQEGQPEEQPQTTQTQPFQPDSGIDNQ. Over residues 99–120 the composition is skewed to low complexity; sequence EPIQEGQPEEQPQTTQTQPFQP. Residues 117–212 form an oapA region; it reads PFQPDSGIDN…QPDGSFIRAR (96 aa).

The protein belongs to the OapA family.

Its subcellular location is the cell inner membrane. In terms of biological role, cell division protein whose function is related to the generation of a transient cell wall structure. Function is linked to the late stages of cell division. The protein is Cell division protein YtfB (ytfB) of Escherichia coli (strain K12).